We begin with the raw amino-acid sequence, 206 residues long: Recombination protein RecR (206 aa).

Residues 58–73 (CNICGYITEKNICNFC) form a C4-type zinc finger. The Toprim domain maps to 81-178 (STIMIVADNR…KITKLAYGIP (98 aa)).

Belongs to the RecR family.

Functionally, may play a role in DNA repair. It seems to be involved in an RecBC-independent recombinational process of DNA repair. It may act with RecF and RecO. The polypeptide is Recombination protein RecR (Phytoplasma mali (strain AT)).